We begin with the raw amino-acid sequence, 125 residues long: MAAGVRQSRGTAARKVGRRAEVIAALWLMAKGYRILGFRLATPLGEIDLLAQRGKVLAVVEVKQRTTIEDALDAVKPTQRERLRRAATHLAAHRAGLRDLLVRLDLIAMAPGRPPRHLPDAWGGA.

Belongs to the UPF0102 family.

This chain is UPF0102 protein CCNA_00142, found in Caulobacter vibrioides (strain NA1000 / CB15N) (Caulobacter crescentus).